The chain runs to 201 residues: IDLSRF-like peptide (201 aa).

The signal sequence occupies residues 1–28; it reads MVRRFCNGAVALGIALTACAAFPRAIMA. Residues 43-201 constitute a propeptide that is removed on maturation; the sequence is SDACHPYEPF…EKLVKTGFLD (159 aa). The region spanning 45 to 85 is the LDL-receptor class A domain; sequence ACHPYEPFKCPGDGLCISIQYLCDGAPDCQDGYDEDSRLCT. Intrachain disulfides connect Cys-46–Cys-60, Cys-54–Cys-73, and Cys-67–Cys-84.

Expressed in central brain, antennal and optical lobes, in gnathal, thoracic and abdominal ganglia and in the retrocerebral complex (at protein level).

The protein resides in the secreted. This chain is IDLSRF-like peptide, found in Camponotus floridanus (Florida carpenter ant).